The sequence spans 473 residues: Photosystem II CP43 reaction center protein (473 aa).

The propeptide occupies methionine 1–glutamate 14. The residue at position 15 (threonine 15) is an N-acetylthreonine. Threonine 15 bears the Phosphothreonine mark. The next 5 helical transmembrane spans lie at leucine 69 to alanine 93, leucine 134 to asparagine 155, lysine 178 to serine 200, lysine 255 to serine 275, and tryptophan 291 to serine 312. Glutamate 367 serves as a coordination point for [CaMn4O5] cluster. The chain crosses the membrane as a helical span at residues arginine 447 to proline 471.

The protein belongs to the PsbB/PsbC family. PsbC subfamily. As to quaternary structure, PSII is composed of 1 copy each of membrane proteins PsbA, PsbB, PsbC, PsbD, PsbE, PsbF, PsbH, PsbI, PsbJ, PsbK, PsbL, PsbM, PsbT, PsbX, PsbY, PsbZ, Psb30/Ycf12, at least 3 peripheral proteins of the oxygen-evolving complex and a large number of cofactors. It forms dimeric complexes. The cofactor is Binds multiple chlorophylls and provides some of the ligands for the Ca-4Mn-5O cluster of the oxygen-evolving complex. It may also provide a ligand for a Cl- that is required for oxygen evolution. PSII binds additional chlorophylls, carotenoids and specific lipids..

Its subcellular location is the plastid. The protein localises to the chloroplast thylakoid membrane. In terms of biological role, one of the components of the core complex of photosystem II (PSII). It binds chlorophyll and helps catalyze the primary light-induced photochemical processes of PSII. PSII is a light-driven water:plastoquinone oxidoreductase, using light energy to abstract electrons from H(2)O, generating O(2) and a proton gradient subsequently used for ATP formation. The polypeptide is Photosystem II CP43 reaction center protein (Chlorella vulgaris (Green alga)).